The primary structure comprises 125 residues: Oxytocin-neurophysin 1 (125 aa).

Positions methionine 1 to alanine 19 are cleaved as a signal peptide. Cysteine 20 and cysteine 25 are oxidised to a cystine. At glycine 28 the chain carries Glycine amide. 7 disulfide bridges follow: cysteine 41–cysteine 85, cysteine 44–cysteine 58, cysteine 52–cysteine 75, cysteine 59–cysteine 65, cysteine 92–cysteine 104, cysteine 98–cysteine 116, and cysteine 105–cysteine 110.

It belongs to the vasopressin/oxytocin family. As to quaternary structure, interacts with oxytocin receptor (Ki=1.5 nM). Interacts with vasopressin V1aR/AVPR1A (Ki=37 nM), V1bR/AVPR1B (Ki=222 nM), and V2R/AVPR2 receptors (Ki=823 nM).

Functionally, neurophysin 1 specifically binds oxytocin. Its function is as follows. Oxytocin causes contraction of the smooth muscle of the uterus and of the mammary gland. Acts by binding to oxytocin receptor (OXTR). The sequence is that of Oxytocin-neurophysin 1 (OXT) from Sus scrofa (Pig).